The sequence spans 302 residues: Tyrosine recombinase XerC (302 aa).

The 85-residue stretch at 6-90 (DLEVTCLQDY…AIKQWGEFLL (85 aa)) folds into the Core-binding (CB) domain. The Tyr recombinase domain maps to 111 to 290 (PLPKNMDVDS…DFQHLAKVYD (180 aa)). Residues Arg150, Lys174, His242, Arg245, and His268 contribute to the active site. The active-site O-(3'-phospho-DNA)-tyrosine intermediate is the Tyr277.

The protein belongs to the 'phage' integrase family. XerC subfamily. In terms of assembly, forms a cyclic heterotetrameric complex composed of two molecules of XerC and two molecules of XerD.

It localises to the cytoplasm. In terms of biological role, site-specific tyrosine recombinase, which acts by catalyzing the cutting and rejoining of the recombining DNA molecules. The XerC-XerD complex is essential to convert dimers of the bacterial chromosome into monomers to permit their segregation at cell division. It also contributes to the segregational stability of plasmids. This chain is Tyrosine recombinase XerC, found in Shewanella putrefaciens (strain CN-32 / ATCC BAA-453).